Reading from the N-terminus, the 511-residue chain is Fas-activated serine/threonine kinase (511 aa).

In terms of domain architecture, RAP spans 439 to 497; that stretch reads VVLMLRERWHFCRDGRVLLGSRALRERHLGLMGYQLLPLPFEELESQRGLPQLKSYLRQ.

The protein belongs to the FAST protein kinase family. In terms of assembly, interacts with TIA1; the interactions leads to TIA1 phosphorylation. Interacts with TIAR. Post-translationally, autophosphorylated on serine/threonine residues. Activated by dephosphorylation.

The protein resides in the mitochondrion matrix. It catalyses the reaction L-seryl-[Fas-activated protein] + ATP = O-phospho-L-seryl-[Fas-activated protein] + ADP + H(+). The catalysed reaction is L-threonyl-[Fas-activated protein] + ATP = O-phospho-L-threonyl-[Fas-activated protein] + ADP + H(+). It carries out the reaction L-seryl-[protein] + ATP = O-phospho-L-seryl-[protein] + ADP + H(+). The enzyme catalyses L-threonyl-[protein] + ATP = O-phospho-L-threonyl-[protein] + ADP + H(+). In terms of biological role, phosphorylates the splicing regulator TIA1, thereby promoting the inclusion of FAS exon 6, which leads to an mRNA encoding a pro-apoptotic form of the receptor. Required for the biogenesis of some mitochondrial-encoded mRNAs, specifically stabilizes ND6 (NADH dehydrogenase complex subunit 6) mRNA, and regulates its levels. The polypeptide is Fas-activated serine/threonine kinase (Fastk) (Mus musculus (Mouse)).